Reading from the N-terminus, the 147-residue chain is Lectin-like protein BA14k (147 aa).

Positions 1 to 26 (MNSFRKTCAGALALIFGATSIVPTVA) are cleaved as a signal peptide. Residues 80 to 100 (GWWYPLAAFGAGAIIGGAISQ) form a helical membrane-spanning segment.

The protein belongs to the BA14k family.

It is found in the cell membrane. In terms of biological role, has immunoglobulin-binding and hemagglutination properties, and can bind to mannose. Essential for virulence. May be involved in LPS biosynthesis or polysaccharide transport. The sequence is that of Lectin-like protein BA14k from Brucella abortus (strain S19).